We begin with the raw amino-acid sequence, 378 residues long: Neutral protease 2 homolog ARB_04336 (378 aa).

An N-terminal signal peptide occupies residues 1 to 19 (MKFFTALAAVGALLAPAVA). Residues 20 to 186 (LPTPASEASH…DYFSKGLDKR (167 aa)) constitute a propeptide that is removed on maturation. Cystine bridges form between C192–C262 and C269–C287. H311 provides a ligand contact to Zn(2+). E312 is an active-site residue. 2 residues coordinate Zn(2+): H315 and D326.

It belongs to the peptidase M35 family. Zn(2+) serves as cofactor.

The protein resides in the secreted. It catalyses the reaction Preferential cleavage of bonds with hydrophobic residues in P1'. Also 3-Asn-|-Gln-4 and 8-Gly-|-Ser-9 bonds in insulin B chain.. Secreted metalloproteinase that allows assimilation of proteinaceous substrates. Shows high activities on basic nuclear substrates such as histone and protamine. May be involved in virulence. The protein is Neutral protease 2 homolog ARB_04336 of Arthroderma benhamiae (strain ATCC MYA-4681 / CBS 112371) (Trichophyton mentagrophytes).